A 353-amino-acid polypeptide reads, in one-letter code: tRNA N6-adenosine threonylcarbamoyltransferase (353 aa).

Residues His109 and His113 each contribute to the Fe cation site. Residues 136–140, Asp169, Gly182, Asp186, and Asn284 contribute to the substrate site; that span reads TVSGG. Asp312 contributes to the Fe cation binding site.

This sequence belongs to the KAE1 / TsaD family. The cofactor is Fe(2+).

Its subcellular location is the cytoplasm. The enzyme catalyses L-threonylcarbamoyladenylate + adenosine(37) in tRNA = N(6)-L-threonylcarbamoyladenosine(37) in tRNA + AMP + H(+). In terms of biological role, required for the formation of a threonylcarbamoyl group on adenosine at position 37 (t(6)A37) in tRNAs that read codons beginning with adenine. Is involved in the transfer of the threonylcarbamoyl moiety of threonylcarbamoyl-AMP (TC-AMP) to the N6 group of A37, together with TsaE and TsaB. TsaD likely plays a direct catalytic role in this reaction. In Chlorobium limicola (strain DSM 245 / NBRC 103803 / 6330), this protein is tRNA N6-adenosine threonylcarbamoyltransferase.